The chain runs to 99 residues: MVNVKVEFLGGLDAIFGKQRVHKIKMDKEDPVTVGDLIDHIVSTMINNPNDVSIFIEDDSIRPGIITLINDTDWELEGEKDYILEDGDIISFTSTLHGG.

The residue at position 99 (G99) is a 1-thioglycine. A Glycyl lysine isopeptide (Gly-Lys) (interchain with K-? in acceptor proteins) cross-link involves residue G99.

This sequence belongs to the URM1 family. Homodimer; homodimerization may provide an autoprotection to the highly active C-terminal residue before attacking its substrates. Interacts with NCS2 and NCS6. Forms a conjugate with the target protein AHP1. C-terminal thiocarboxylation occurs in 2 steps, it is first acyl-adenylated (-COAMP) via the hesA/moeB/thiF part of UBA4, then thiocarboxylated (-COSH) via the rhodanese domain of UBA4.

It is found in the cytoplasm. The protein resides in the nucleus. Its pathway is tRNA modification; 5-methoxycarbonylmethyl-2-thiouridine-tRNA biosynthesis. Its function is as follows. Acts as a sulfur carrier required for 2-thiolation of mcm(5)S(2)U at tRNA wobble positions of cytosolic tRNA(Lys), tRNA(Glu) and tRNA(Gln). Serves as sulfur donor in tRNA 2-thiolation reaction by being thiocarboxylated (-COSH) at its C-terminus by the MOCS3 homolog UBA4. The sulfur is then transferred to tRNA to form 2-thiolation of mcm(5)S(2)U. Prior mcm(5) tRNA modification by the elongator complex is required for 2-thiolation. Also acts as a ubiquitin-like protein (UBL) that is covalently conjugated via an isopeptide bond to lysine residues of target proteins such as AHP1. The thiocarboxylated form serves as substrate for conjugation and oxidative stress specifically induces the formation of UBL-protein conjugates. The polypeptide is Ubiquitin-related modifier 1 (Saccharomyces cerevisiae (strain RM11-1a) (Baker's yeast)).